We begin with the raw amino-acid sequence, 246 residues long: Probable transcriptional regulatory protein CA_C2295 (246 aa).

The protein belongs to the TACO1 family.

It is found in the cytoplasm. The chain is Probable transcriptional regulatory protein CA_C2295 from Clostridium acetobutylicum (strain ATCC 824 / DSM 792 / JCM 1419 / IAM 19013 / LMG 5710 / NBRC 13948 / NRRL B-527 / VKM B-1787 / 2291 / W).